The sequence spans 435 residues: uncharacterized protein (435 aa).

The next 12 membrane-spanning stretches (helical) occupy residues 26 to 46 (LLSG…VAAP), 61 to 81 (IVFS…GSLL), 96 to 116 (IWSF…LYLF), 119 to 139 (LIGL…ALWF), 150 to 170 (LFDS…AFLV), 177 to 197 (VAFL…WQYY), 242 to 262 (VWGL…LLTW), 281 to 301 (FTAV…GWLV), 325 to 345 (FGFF…IICI), 347 to 367 (IGLA…AELA), 385 to 405 (LFGG…TGSF), and 407 to 427 (LSFL…VFVL).

Belongs to the major facilitator superfamily. Phthalate permease family.

The protein localises to the cell membrane. This is an uncharacterized protein from Bacillus subtilis (strain 168).